Here is a 167-residue protein sequence, read N- to C-terminus: S-ribosylhomocysteine lyase (167 aa).

Fe cation is bound by residues His54, His58, and Cys128.

This sequence belongs to the LuxS family. As to quaternary structure, homodimer. It depends on Fe cation as a cofactor.

The catalysed reaction is S-(5-deoxy-D-ribos-5-yl)-L-homocysteine = (S)-4,5-dihydroxypentane-2,3-dione + L-homocysteine. Involved in the synthesis of autoinducer 2 (AI-2) which is secreted by bacteria and is used to communicate both the cell density and the metabolic potential of the environment. The regulation of gene expression in response to changes in cell density is called quorum sensing. Catalyzes the transformation of S-ribosylhomocysteine (RHC) to homocysteine (HC) and 4,5-dihydroxy-2,3-pentadione (DPD). This is S-ribosylhomocysteine lyase from Sulfurimonas denitrificans (strain ATCC 33889 / DSM 1251) (Thiomicrospira denitrificans (strain ATCC 33889 / DSM 1251)).